The primary structure comprises 419 residues: Dynein regulatory complex protein 9 (419 aa).

2 disordered regions span residues 1 to 47 and 393 to 419; these read MEGE…SPEV and SFKM…RGKK. The span at 34–44 shows a compositional bias: acidic residues; sequence EELEEEEEETS. In terms of domain architecture, IQ spans 371–400; the sequence is ELRSIVKLQAWWRGTVVRREIGSFKMPKKE.

This sequence belongs to the DRC9 family. Component of the nexin-dynein regulatory complex (N-DRC). Interacts (via IQ domain) with CALM when calcium levels are low. Does not interact with CALM in the presence of Ca(2+). Interacts with the HSP70 proteins HSPA1L and HSPA8. May form a complex with CAMK4 and HSP70.

It is found in the cytoplasm. Its subcellular location is the cell projection. It localises to the cilium. The protein resides in the flagellum. The protein localises to the cytoskeleton. It is found in the flagellum axoneme. In terms of biological role, component of the nexin-dynein regulatory complex (N-DRC), a key regulator of ciliary/flagellar motility which maintains the alignment and integrity of the distal axoneme and regulates microtubule sliding in motile axonemes. Binds calmodulin when cellular Ca(2+) levels are low and thereby contributes to the regulation of calcium and calmodulin-dependent protein kinase IV (CAMK4) activity; contributes to the regulation of CAMK4 signaling cascades. Required for normal axoneme assembly in sperm flagella, normal sperm tail formation and for male fertility. The protein is Dynein regulatory complex protein 9 (Iqcg) of Rattus norvegicus (Rat).